We begin with the raw amino-acid sequence, 325 residues long: Beta-ketoacyl-[acyl-carrier-protein] synthase III (325 aa).

Residues cysteine 116 and histidine 252 contribute to the active site. An ACP-binding region spans residues 253–257 (QANLR). The active site involves asparagine 282.

Belongs to the thiolase-like superfamily. FabH family. As to quaternary structure, homodimer.

Its subcellular location is the cytoplasm. It catalyses the reaction butanoyl-CoA + malonyl-[ACP] + H(+) = 3-oxohexanoyl-[ACP] + CO2 + CoA. The catalysed reaction is hexanoyl-CoA + malonyl-[ACP] + H(+) = 3-oxooctanoyl-[ACP] + CO2 + CoA. The enzyme catalyses octanoyl-CoA + malonyl-[ACP] + H(+) = 3-oxodecanoyl-[ACP] + CO2 + CoA. It carries out the reaction decanoyl-CoA + malonyl-[ACP] + H(+) = 3-oxododecanoyl-[ACP] + CO2 + CoA. It catalyses the reaction 2-methylpropanoyl-CoA + malonyl-[ACP] + H(+) = 4-methyl-3-oxopentanoyl-[ACP] + CO2 + CoA. The catalysed reaction is 3-methylbutanoyl-CoA + malonyl-[ACP] + H(+) = 5-methyl-3-oxohexanoyl-[ACP] + CO2 + CoA. The enzyme catalyses malonyl-[ACP] + acetyl-CoA + H(+) = 3-oxobutanoyl-[ACP] + CO2 + CoA. The protein operates within lipid metabolism; fatty acid biosynthesis. Functionally, catalyzes the condensation reaction of fatty acid synthesis by the addition to an acyl acceptor of two carbons from malonyl-ACP. Catalyzes the first condensation reaction which initiates fatty acid synthesis and may therefore play a role in governing the total rate of fatty acid production. Possesses both acetoacetyl-ACP synthase and acetyl transacylase activities. Can use a wide range of acyl-CoAs as the primer substrate in vitro, with a slight preference for short, medium-straight chain acyl-CoAs. Can also use branched-chain acyl-CoAs and acetyl-CoA. The sequence is that of Beta-ketoacyl-[acyl-carrier-protein] synthase III from Xanthomonas campestris pv. campestris (strain 8004).